We begin with the raw amino-acid sequence, 330 residues long: Aspartate--ammonia ligase (330 aa).

This sequence belongs to the class-II aminoacyl-tRNA synthetase family. AsnA subfamily.

The protein resides in the cytoplasm. It carries out the reaction L-aspartate + NH4(+) + ATP = L-asparagine + AMP + diphosphate + H(+). It functions in the pathway amino-acid biosynthesis; L-asparagine biosynthesis; L-asparagine from L-aspartate (ammonia route): step 1/1. This chain is Aspartate--ammonia ligase, found in Streptococcus pneumoniae serotype 19F (strain G54).